The primary structure comprises 405 residues: CMP-sialic acid transporter 4 (405 aa).

Topologically, residues 1 to 43 (MQRNGVMECSVCHSKVVAPSPRSVSRAYDKHRSKISSKYRALN) are cytoplasmic. A helical transmembrane segment spans residues 44-64 (FLLVSGDCILVGLQPILVFMS). The Lumenal portion of the chain corresponds to 65–74 (KVDGKFQFSP). Residues 75–95 (ISVNFLTEVTKVIFAIVMLII) traverse the membrane as a helical segment. At 96–121 (QSRKQKVGEKPLLSLSTFVQAARNNA) the chain is on the cytoplasmic side. Residues 122-142 (LLAVPALLYAINNYLKFIMQL) form a helical membrane-spanning segment. A topological domain (lumenal) is located at residue Y143. The chain crosses the membrane as a helical span at residues 144–164 (FSPATVKMLSNLKVLVIAILL). Residues 165–171 (KFIMRRK) are Cytoplasmic-facing. Residues 172–192 (FSIIQWEALALLLIGISVNQL) traverse the membrane as a helical segment. Over 193–203 (SSIPDGTKSFG) the chain is Lumenal. A helical membrane pass occupies residues 204-224 (LAVTTIAYIYTLIFVTVPSLA). The Cytoplasmic segment spans residues 225–244 (SVYNEYALKSQFDTSIYLQN). Residues 245 to 265 (LFLYGYGAIFNFLGILGTVIF) form a helical membrane-spanning segment. Topologically, residues 266–281 (QGPESFDILQGHSRAT) are lumenal. A helical membrane pass occupies residues 282 to 302 (MFLICNNAAQGILSSFFFKYA). The Cytoplasmic segment spans residues 303-322 (DTILKKYSSTVATIFTGLAS). Residues 323–343 (AAFLGHTLTVNFLLGISIVFI) traverse the membrane as a helical segment. Residues 344 to 405 (SMHQFFSPLA…TDERKPLLPI (62 aa)) are Lumenal-facing. Residues 386-405 (AADDASHLTSTDERKPLLPI) form a disordered region. The span at 389-405 (DASHLTSTDERKPLLPI) shows a compositional bias: basic and acidic residues.

This sequence belongs to the nucleotide-sugar transporter family. CMP-Sialate:CMP antiporter (TC 2.A.7.12) subfamily.

Its subcellular location is the golgi apparatus membrane. Functionally, sugar transporter involved in the transport of CMP-sialic acid from the cytoplasm into the Golgi. May transport important nucleotide sugars such as CMP-Kdo (2-keto-3-deoxy-D-manno-octulosonic acid) in physiological conditions. This chain is CMP-sialic acid transporter 4, found in Oryza sativa subsp. indica (Rice).